A 446-amino-acid polypeptide reads, in one-letter code: Phosphoglucosamine mutase (446 aa).

Serine 103 (phosphoserine intermediate) is an active-site residue. The Mg(2+) site is built by serine 103, aspartate 242, aspartate 244, and aspartate 246. Residue serine 103 is modified to Phosphoserine.

Belongs to the phosphohexose mutase family. It depends on Mg(2+) as a cofactor. In terms of processing, activated by phosphorylation.

It catalyses the reaction alpha-D-glucosamine 1-phosphate = D-glucosamine 6-phosphate. In terms of biological role, catalyzes the conversion of glucosamine-6-phosphate to glucosamine-1-phosphate. The protein is Phosphoglucosamine mutase of Vibrio cholerae serotype O1 (strain ATCC 39541 / Classical Ogawa 395 / O395).